The chain runs to 277 residues: 5'-nucleotidase SurE (277 aa).

4 residues coordinate a divalent metal cation: aspartate 14, aspartate 15, serine 46, and asparagine 104.

This sequence belongs to the SurE nucleotidase family. A divalent metal cation serves as cofactor.

The protein resides in the cytoplasm. The enzyme catalyses a ribonucleoside 5'-phosphate + H2O = a ribonucleoside + phosphate. Functionally, nucleotidase that shows phosphatase activity on nucleoside 5'-monophosphates. This chain is 5'-nucleotidase SurE, found in Picosynechococcus sp. (strain ATCC 27264 / PCC 7002 / PR-6) (Agmenellum quadruplicatum).